Consider the following 97-residue polypeptide: uncharacterized protein (97 aa).

May have a regulatory function. This is an uncharacterized protein from Synechocystis sp. (strain ATCC 27184 / PCC 6803 / Kazusa).